We begin with the raw amino-acid sequence, 495 residues long: Protein painting of fourth (495 aa).

Residues 1–51 (MDSKRAALESGDGPDAKRLDTTDDQDKEASGGDGSQVMLAKHVAPYTGHGC) are disordered. One can recognise an RRM domain in the interval 215 to 289 (CSLYVGNIPF…RTLTVRYRRL (75 aa)). Residues 332 to 342 (ISDSDNCSDSS) are compositionally biased toward low complexity. 3 disordered regions span residues 332–358 (ISDSDNCSDSSGNGKEDGKRKKKINEQ), 432–451 (PVPATKPTTQAQDDSQKKAK), and 461–495 (GPFRRGTSAMKTADEYEKDDRLEELYAQLERDPDP). The segment covering 345-358 (GKEDGKRKKKINEQ) has biased composition (basic and acidic residues). The Bipartite nuclear localization signal motif lies at 351 to 367 (RKKKINEQEREIEKLKR). The span at 472-495 (TADEYEKDDRLEELYAQLERDPDP) shows a compositional bias: basic and acidic residues.

In terms of assembly, interacts with Zeste. As to expression, weakly expressed in embryos. Expression increases during larval and pupal stages. In adults, it is predominantly expressed in males, while it is weakly expressed in females.

The protein localises to the nucleus. It localises to the chromosome. Its function is as follows. Probable RNA-binding protein that specifically binds to the fourth chromosome and may bind an RNA that spreads the fourth chromosome. May be a reminiscence of X chromosome dosage compensation of ancestral Drosophila species in which the X and the fourth chromosomes are one single chromosome. This is Protein painting of fourth (Pof) from Drosophila melanogaster (Fruit fly).